The chain runs to 243 residues: Complement C1q tumor necrosis factor-related protein 5 (243 aa).

Positions 1-15 (MRPLLALLLLGLASG) are cleaved as a signal peptide. Positions 15–124 (GSPPLDDNKI…VPPPADTPLP (110 aa)) are disordered. Residues 30 to 95 (GQPGLPGTPG…AGPVGAIGPA (66 aa)) form the Collagen-like domain. The 140-residue stretch at 99–238 (SVPPRSAFSA…GFLVYSDWHS (140 aa)) folds into the C1q domain.

Homotrimer (via collagen-like domain). May form higher order oligomers by supercoiling of the trimers. May interact with ERFE.

The protein localises to the secreted. The chain is Complement C1q tumor necrosis factor-related protein 5 (C1qtnf5) from Rattus norvegicus (Rat).